The following is a 726-amino-acid chain: Replication restart protein PriA (726 aa).

Ile234 serves as a coordination point for ATP. One can recognise a Helicase ATP-binding domain in the interval 234 to 373 (IQSVLYKGVQ…LHRKCFYIKL (140 aa)). A DEAH box motif is present at residues 316–319 (LEEH). 8 residues coordinate Zn(2+): Cys431, Cys434, Cys440, Cys443, Cys458, Cys461, Cys471, and Cys474.

The protein belongs to the helicase family. PriA subfamily. In terms of assembly, component of the replication restart primosome. Zn(2+) serves as cofactor.

It catalyses the reaction Couples ATP hydrolysis with the unwinding of duplex DNA by translocating in the 3'-5' direction.. The catalysed reaction is ATP + H2O = ADP + phosphate + H(+). In terms of biological role, initiates the restart of stalled replication forks, which reloads the replicative helicase on sites other than the origin of replication. Recognizes and binds to abandoned replication forks and remodels them to uncover a helicase loading site. Promotes assembly of the primosome at these replication forks. The sequence is that of Replication restart protein PriA from Buchnera aphidicola subsp. Acyrthosiphon pisum (strain APS) (Acyrthosiphon pisum symbiotic bacterium).